The primary structure comprises 435 residues: NADH-quinone oxidoreductase subunit D 2 (435 aa).

Belongs to the complex I 49 kDa subunit family. NDH-1 is composed of 14 different subunits. Subunits NuoB, C, D, E, F, and G constitute the peripheral sector of the complex.

Its subcellular location is the cell inner membrane. It carries out the reaction a quinone + NADH + 5 H(+)(in) = a quinol + NAD(+) + 4 H(+)(out). In terms of biological role, NDH-1 shuttles electrons from NADH, via FMN and iron-sulfur (Fe-S) centers, to quinones in the respiratory chain. The immediate electron acceptor for the enzyme in this species is believed to be ubiquinone. Couples the redox reaction to proton translocation (for every two electrons transferred, four hydrogen ions are translocated across the cytoplasmic membrane), and thus conserves the redox energy in a proton gradient. This is NADH-quinone oxidoreductase subunit D 2 from Stenotrophomonas maltophilia (strain R551-3).